Consider the following 288-residue polypeptide: Small ribosomal subunit protein uS3 (288 aa).

The region spanning 38–106 (IRRMMSKGLE…QVQLNIIEVK (69 aa)) is the KH type-2 domain. The disordered stretch occupies residues 209 to 288 (PGRETPAEAP…TQPAETQQEG (80 aa)). Residues 219–232 (SRPRRERGDRSERP) show a composition bias toward basic and acidic residues. Residues 249–264 (AGRAAATTIAQAAETP) are compositionally biased toward low complexity. Over residues 277–288 (AATQPAETQQEG) the composition is skewed to polar residues.

Belongs to the universal ribosomal protein uS3 family. Part of the 30S ribosomal subunit. Forms a tight complex with proteins S10 and S14.

In terms of biological role, binds the lower part of the 30S subunit head. Binds mRNA in the 70S ribosome, positioning it for translation. The chain is Small ribosomal subunit protein uS3 from Salinispora tropica (strain ATCC BAA-916 / DSM 44818 / JCM 13857 / NBRC 105044 / CNB-440).